The chain runs to 286 residues: Cytotoxin (286 aa).

Residues 267 to 286 constitute a propeptide that is removed on maturation; the sequence is TFYNYASLVPDLETRVRSAE.

It belongs to the aerolysin family.

The protein resides in the secreted. Functionally, cytotoxin is thought to form hydrophilic pores in cell membranes. This chain is Cytotoxin (ctx), found in Pseudomonas aeruginosa.